The sequence spans 83 residues: Keratin-associated protein 6-1 (83 aa).

Residues 9–15 form an RPT 1-1 repeat; sequence YGGLGCG. One copy of the RPT 1-2 repeat lies at 19-25; the sequence is YGGLGCG. The stretch at 44 to 55 is one RPT 2-1 repeat; the sequence is GYGYGSRSLCGS. The stretch at 56 to 67 is one RPT 2-2 repeat; the sequence is GYGYGSRSLCGS.

It belongs to the KRTAP type 6 family. As to quaternary structure, interacts with wool keratins.

In the wool cortex, wool keratin intermediate filaments are embedded in an interfilamentous matrix, consisting of hair keratin-associated proteins (KRTAP), which are essential for the formation of a rigid and resistant wool shaft through their extensive disulfide bond cross-linking with abundant cysteine residues of wool keratins. The matrix proteins include the high-sulfur and high-glycine-tyrosine keratins. The sequence is that of Keratin-associated protein 6-1 (KRTAP6-1) from Ovis aries (Sheep).